A 327-amino-acid chain; its full sequence is Probable cell division protein WhiA (327 aa).

The H-T-H motif DNA-binding region spans 275-308 (SLEELGRLADPPMTKDAVAGRIRRLLSMADRKAK).

This sequence belongs to the WhiA family.

Functionally, involved in cell division and chromosome segregation. This Mycobacterium avium (strain 104) protein is Probable cell division protein WhiA.